The chain runs to 321 residues: MATIRVPNEVPSPAQDSETLKQAIRGWGTDEKAIIRVLGQRDQSQRRKIRESFREIYGKDLIDVLSSELSGDFMKAVVSWTYDPAERDARLVNKILNKEKKKKSLENLKVIVEISCTTSPNHLIAVRKAYCSLFDSSLEEHIASSLPFPLAKLLVTLASTFRYDKDRTDAEVATIEAAMLREAIEKKQLDHDHVLYILGTRSIYQLRETFVAYKKNYGVTIDKDVDGCPGDADLRSLLKVAIFCIDTPEKHFAKVVRDSIEGFGTDEDSLTRAIVTRAEIDLMKVRGEYFNMYNTSMDNAITGDISGDYKDFIITLLGSKI.

Residue Ala-2 is modified to N-acetylalanine. Annexin repeat units lie at residues 11–82, 83–159, 171–243, and 247–318; these read PSPA…SWTY, DPAE…TLAS, EVAT…VAIF, and TPEK…TLLG. Gly-26, Gly-28, and Glu-68 together coordinate Ca(2+). Position 117 is a phosphothreonine (Thr-117). Ca(2+) contacts are provided by Ile-260 and Gly-264. A Phosphotyrosine modification is found at Tyr-289. Asp-304 contacts Ca(2+).

This sequence belongs to the annexin (TC 1.A.31.1) family. In terms of tissue distribution, expressed mainly in roots and flowers. Lower in stems and leaves.

The protein is Annexin D3 (ANN3) of Arabidopsis thaliana (Mouse-ear cress).